Consider the following 664-residue polypeptide: Protein-arginine deiminase type-3 (664 aa).

This sequence belongs to the protein arginine deiminase family. Requires Ca(2+) as cofactor. Hair follicles, and epidermis at very low levels.

The protein resides in the cytoplasm. The enzyme catalyses L-arginyl-[protein] + H2O = L-citrullyl-[protein] + NH4(+). Its function is as follows. Catalyzes the deimination of arginine residues of proteins. The polypeptide is Protein-arginine deiminase type-3 (PADI3) (Homo sapiens (Human)).